Here is a 441-residue protein sequence, read N- to C-terminus: Xaa-Pro dipeptidase (441 aa).

Mn(2+)-binding residues include Asp-244, Asp-255, His-336, Glu-381, and Glu-420.

Belongs to the peptidase M24B family. Bacterial-type prolidase subfamily. It depends on Mn(2+) as a cofactor.

It carries out the reaction Xaa-L-Pro dipeptide + H2O = an L-alpha-amino acid + L-proline. In terms of biological role, splits dipeptides with a prolyl residue in the C-terminal position. The polypeptide is Xaa-Pro dipeptidase (Xanthomonas euvesicatoria pv. vesicatoria (strain 85-10) (Xanthomonas campestris pv. vesicatoria)).